The following is a 606-amino-acid chain: Pescadillo homolog (606 aa).

A BRCT domain is found at 346–447 (LSTSLFSPYT…KILLEGPYGQ (102 aa)). A disordered region spans residues 461 to 497 (YEGAYDPAAGPLGPSGVEQESESEADEVSEEDEEDQG). A compositionally biased stretch (acidic residues) spans 479 to 496 (QESESEADEVSEEDEEDQ).

It belongs to the pescadillo family. In terms of assembly, component of the NOP7 complex, composed of ERB1, NOP7 and YTM1. The complex is held together by ERB1, which interacts with NOP7 via its N-terminal domain and with YTM1 via a high-affinity interaction between the seven-bladed beta-propeller domains of the 2 proteins. The NOP7 complex associates with the 66S pre-ribosome.

It localises to the nucleus. The protein resides in the nucleolus. The protein localises to the nucleoplasm. Component of the NOP7 complex, which is required for maturation of the 25S and 5.8S ribosomal RNAs and formation of the 60S ribosome. This is Pescadillo homolog from Laccaria bicolor (strain S238N-H82 / ATCC MYA-4686) (Bicoloured deceiver).